We begin with the raw amino-acid sequence, 574 residues long: Hyaluronan synthase 3 (574 aa).

Residues 1–15 are Cytoplasmic-facing; it reads MPVSLSTALRVVGTS. Residues 16-36 traverse the membrane as a helical segment; that stretch reads LFALAVLGGILAAYVTGYQFI. Over 37–44 the chain is Extracellular; sequence HTEKHYLS. The helical transmembrane segment at 45-65 threads the bilayer; the sequence is FGLYGAILGLHLFIQSLFAFL. Residues 66–398 lie on the Cytoplasmic side of the membrane; that stretch reads EHRRMRAERQ…NALWFHKHHL (333 aa). Residues 399 to 419 form a helical membrane-spanning segment; sequence WMTYESVVTGFFPFFLIATVI. At 420–429 the chain is on the extracellular side; sequence QLFYRGRIWN. A helical transmembrane segment spans residues 430–450; sequence ILLFLLTVQLVGIIKATYACF. Residues 451–456 lie on the Cytoplasmic side of the membrane; sequence LRGSAE. Residues 457–477 form a helical membrane-spanning segment; the sequence is MIFVSLYALLYMSSLLPAKMF. Residues 478 to 494 are Extracellular-facing; the sequence is AIATINKSGWGTSGRRT. The chain crosses the membrane as a helical span at residues 495–515; sequence IVVNFVGLLPVSVWAAVLLGG. At 516–530 the chain is on the cytoplasmic side; the sequence is LAYTAYSQDLLSDTE. Residues 531–551 form a helical membrane-spanning segment; the sequence is VAFLISGAVLYACYWVALLTL. Residues 552 to 574 are Extracellular-facing; that stretch reads YLAMVARRCGKRKEQCGLVFAEV.

Belongs to the NodC/HAS family. Requires Mg(2+) as cofactor. In terms of processing, O-GlcNAcylation increases the hyaluronan synthase activity, HAS3 stability and its plasma membrane residence. The concentration of UDP-GlcNAc controls the level of O-GlcNAc modification.

Its subcellular location is the cell membrane. It is found in the golgi apparatus membrane. The protein resides in the golgi apparatus. It localises to the trans-Golgi network membrane. The protein localises to the cytoplasmic vesicle. The enzyme catalyses [hyaluronan](n) + UDP-N-acetyl-alpha-D-glucosamine = N-acetyl-beta-D-glucosaminyl-(1-&gt;4)-[hyaluronan](n) + UDP + H(+). The catalysed reaction is N-acetyl-beta-D-glucosaminyl-(1-&gt;4)-[hyaluronan](n) + UDP-alpha-D-glucuronate = [hyaluronan](n+1) + UDP + H(+). Its pathway is glycan biosynthesis; hyaluronan biosynthesis. Its function is as follows. Catalyzes the addition of GlcNAc or GlcUA monosaccharides to the nascent hyaluronan polymer. Therefore, it is essential to hyaluronan synthesis a major component of most extracellular matrices that has a structural role in tissues architectures and regulates cell adhesion, migration and differentiation. This is one of three isoenzymes responsible for cellular hyaluronan synthesis. The chain is Hyaluronan synthase 3 (HAS3) from Gallus gallus (Chicken).